A 727-amino-acid polypeptide reads, in one-letter code: Polyphosphate kinase (727 aa).

Position 82 (asparagine 82) interacts with ATP. The Mg(2+) site is built by arginine 412 and arginine 442. The active-site Phosphohistidine intermediate is histidine 472. ATP is bound by residues tyrosine 505, arginine 601, and histidine 629.

It belongs to the polyphosphate kinase 1 (PPK1) family. It depends on Mg(2+) as a cofactor. In terms of processing, an intermediate of this reaction is the autophosphorylated ppk in which a phosphate is covalently linked to a histidine residue through a N-P bond.

The catalysed reaction is [phosphate](n) + ATP = [phosphate](n+1) + ADP. Functionally, catalyzes the reversible transfer of the terminal phosphate of ATP to form a long-chain polyphosphate (polyP). In Pseudomonas putida (strain ATCC 47054 / DSM 6125 / CFBP 8728 / NCIMB 11950 / KT2440), this protein is Polyphosphate kinase.